A 734-amino-acid polypeptide reads, in one-letter code: Photosystem I P700 chlorophyll a apoprotein A2 (734 aa).

8 helical membrane passes run 46–69 (IFAS…FHVA), 135–158 (LYSG…LHLQ), 175–199 (LNHH…HVAI), 273–291 (IAHH…GHMY), 330–353 (LHFQ…QHMY), 369–395 (AALY…IFFV), 417–439 (AIIS…LYVH), and 517–535 (FLVH…LILV). [4Fe-4S] cluster-binding residues include Cys559 and Cys568. 2 helical membrane-spanning segments follow: residues 575–596 (AFYL…YWHW) and 643–665 (LSVW…MFLI). His654, Met662, and Tyr670 together coordinate chlorophyll a. Trp671 contacts phylloquinone. Residues 707–727 (LVGLVHFTVGYIFTYAAFVIA) traverse the membrane as a helical segment.

Belongs to the PsaA/PsaB family. The PsaA/B heterodimer binds the P700 chlorophyll special pair and subsequent electron acceptors. PSI consists of a core antenna complex that captures photons, and an electron transfer chain that converts photonic excitation into a charge separation. The eukaryotic PSI reaction center is composed of at least 11 subunits. The cofactor is P700 is a chlorophyll a/chlorophyll a' dimer, A0 is one or more chlorophyll a, A1 is one or both phylloquinones and FX is a shared 4Fe-4S iron-sulfur center..

It is found in the plastid. It localises to the chloroplast thylakoid membrane. The enzyme catalyses reduced [plastocyanin] + hnu + oxidized [2Fe-2S]-[ferredoxin] = oxidized [plastocyanin] + reduced [2Fe-2S]-[ferredoxin]. In terms of biological role, psaA and PsaB bind P700, the primary electron donor of photosystem I (PSI), as well as the electron acceptors A0, A1 and FX. PSI is a plastocyanin/cytochrome c6-ferredoxin oxidoreductase, converting photonic excitation into a charge separation, which transfers an electron from the donor P700 chlorophyll pair to the spectroscopically characterized acceptors A0, A1, FX, FA and FB in turn. Oxidized P700 is reduced on the lumenal side of the thylakoid membrane by plastocyanin or cytochrome c6. The chain is Photosystem I P700 chlorophyll a apoprotein A2 from Guillardia theta (Cryptophyte).